The primary structure comprises 114 residues: Ribosome-binding factor A (114 aa).

This sequence belongs to the RbfA family. As to quaternary structure, monomer. Binds 30S ribosomal subunits, but not 50S ribosomal subunits or 70S ribosomes.

It is found in the cytoplasm. Its function is as follows. One of several proteins that assist in the late maturation steps of the functional core of the 30S ribosomal subunit. Associates with free 30S ribosomal subunits (but not with 30S subunits that are part of 70S ribosomes or polysomes). Required for efficient processing of 16S rRNA. May interact with the 5'-terminal helix region of 16S rRNA. In Listeria innocua serovar 6a (strain ATCC BAA-680 / CLIP 11262), this protein is Ribosome-binding factor A.